An 80-amino-acid polypeptide reads, in one-letter code: Sulfur carrier protein TusA (80 aa).

Catalysis depends on cysteine 17, which acts as the Cysteine persulfide intermediate.

Belongs to the sulfur carrier protein TusA family.

The protein localises to the cytoplasm. Sulfur carrier protein which probably makes part of a sulfur-relay system. In Pseudomonas putida (strain GB-1), this protein is Sulfur carrier protein TusA.